A 171-amino-acid polypeptide reads, in one-letter code: Der GTPase-activating protein YihI (171 aa).

Disordered regions lie at residues 1-99 (MKKP…QAEL) and 145-171 (LSYD…RGGN). The span at 20–30 (TREELNQEARD) shows a compositional bias: basic and acidic residues. The span at 31 to 40 (RKRLKKHRGH) shows a compositional bias: basic residues. The segment covering 147-160 (YDDDEEDDEEDEKQ) has biased composition (acidic residues).

The protein belongs to the YihI family. As to quaternary structure, interacts with Der.

A GTPase-activating protein (GAP) that modifies Der/EngA GTPase function. May play a role in ribosome biogenesis. This chain is Der GTPase-activating protein YihI, found in Salmonella agona (strain SL483).